The primary structure comprises 466 residues: Asparagine--tRNA ligase (466 aa).

It belongs to the class-II aminoacyl-tRNA synthetase family. Homodimer.

The protein resides in the cytoplasm. It carries out the reaction tRNA(Asn) + L-asparagine + ATP = L-asparaginyl-tRNA(Asn) + AMP + diphosphate + H(+). The protein is Asparagine--tRNA ligase of Colwellia psychrerythraea (strain 34H / ATCC BAA-681) (Vibrio psychroerythus).